We begin with the raw amino-acid sequence, 211 residues long: MGQKSNPIGLRLKIINTWDSLWYANKDYTTKLHEDFLLRKFIKKAFYHASISKVVIARKVDVIMVNVYSAKPGVIIGKKGADIDKVKQKIVKMINNNIELNIIEVKKPELKAILIAENIAQQLERRVSFRRAMKRSVQSCLKIGAKGIKVSCAGRLGGAEIARTEWYKEGSVPLHTFRANIDYGFSEAKTIYGIIGVKVWVYLGETKSSNE.

Residues 38–106 (LRKFIKKAFY…NIELNIIEVK (69 aa)) form the KH type-2 domain.

The protein belongs to the universal ribosomal protein uS3 family. Part of the 30S ribosomal subunit. Forms a tight complex with proteins S10 and S14.

Functionally, binds the lower part of the 30S subunit head. Binds mRNA in the 70S ribosome, positioning it for translation. The polypeptide is Small ribosomal subunit protein uS3 (Ehrlichia ruminantium (strain Gardel)).